The following is a 157-amino-acid chain: Probable Brix domain-containing ribosomal biogenesis protein (157 aa).

The 157-residue stretch at 1–157 (MLVTSSRKPS…KLNLRGFKKY (157 aa)) folds into the Brix domain.

In terms of biological role, probably involved in the biogenesis of the ribosome. The polypeptide is Probable Brix domain-containing ribosomal biogenesis protein (Methanosarcina barkeri (strain Fusaro / DSM 804)).